A 918-amino-acid chain; its full sequence is Cap-specific mRNA (nucleoside-2'-O-)-methyltransferase 1 (918 aa).

Residues 1–18 (MADRKSDEGEDEYQHKEQ) show a composition bias toward basic and acidic residues. Disordered regions lie at residues 1–56 (MADR…EERA) and 62–81 (KRGYQAGDDEEDDFTAEEEP). Positions 19-30 (MVTNRTSSFQPK) are enriched in polar residues. Positions 43–56 (RAADRREEFMEERA) are enriched in basic and acidic residues. Over residues 68–80 (GDDEEDDFTAEEE) the composition is skewed to acidic residues. The 47-residue stretch at 86–132 (PLTVAERLMAAMGHKAGEGLGKHGQGISEPIASSTQRGRTGLGHNAG) folds into the G-patch domain. The region spanning 236–465 (FFQNRAAMKT…ERYITCKGLR (230 aa)) is the RrmJ-type SAM-dependent 2'-O-MTase domain. S-adenosyl-L-methionine-binding residues include Gly-298 and Asp-379. The active-site Proton acceptor is Lys-419.

It carries out the reaction a 5'-end (N(7)-methyl 5'-triphosphoguanosine)-ribonucleoside in mRNA + S-adenosyl-L-methionine = a 5'-end (N(7)-methyl 5'-triphosphoguanosine)-(2'-O-methyl-ribonucleoside) in mRNA + S-adenosyl-L-homocysteine + H(+). S-adenosyl-L-methionine-dependent methyltransferase that mediates mRNA cap1 2'-O-ribose methylation to the 5'-cap structure of mRNAs. Methylates the ribose of the first nucleotide of a m(7)GpppG-capped mRNA to produce m(7)GpppNmp (cap1). Cap1 modification is linked to higher levels of translation. This chain is Cap-specific mRNA (nucleoside-2'-O-)-methyltransferase 1, found in Caenorhabditis elegans.